Reading from the N-terminus, the 179-residue chain is UPF0303 protein YBR137W (179 aa).

Belongs to the UPF0303 family.

The protein resides in the cytoplasm. The chain is UPF0303 protein YBR137W from Saccharomyces cerevisiae (strain ATCC 204508 / S288c) (Baker's yeast).